Here is a 405-residue protein sequence, read N- to C-terminus: Acetate kinase (405 aa).

Position 7 (Asn7) interacts with Mg(2+). An ATP-binding site is contributed by Lys14. Position 98 (Arg98) interacts with substrate. The active-site Proton donor/acceptor is Asp156. ATP-binding positions include 215–219, 290–292, and 338–342; these read HLGNG, DLR, and GVGEN. Glu391 provides a ligand contact to Mg(2+).

The protein belongs to the acetokinase family. Homodimer. Mg(2+) serves as cofactor. Requires Mn(2+) as cofactor.

The protein resides in the cytoplasm. It carries out the reaction acetate + ATP = acetyl phosphate + ADP. The protein operates within metabolic intermediate biosynthesis; acetyl-CoA biosynthesis; acetyl-CoA from acetate: step 1/2. Catalyzes the formation of acetyl phosphate from acetate and ATP. Can also catalyze the reverse reaction. This chain is Acetate kinase, found in Gloeobacter violaceus (strain ATCC 29082 / PCC 7421).